A 78-amino-acid chain; its full sequence is Putative membrane protein insertion efficiency factor (78 aa).

Belongs to the UPF0161 family.

The protein resides in the cell inner membrane. Could be involved in insertion of integral membrane proteins into the membrane. This is Putative membrane protein insertion efficiency factor from Roseobacter denitrificans (strain ATCC 33942 / OCh 114) (Erythrobacter sp. (strain OCh 114)).